We begin with the raw amino-acid sequence, 461 residues long: Peptidyl-prolyl cis-trans isomerase-like 4 (461 aa).

Residues 1 to 171 (MSVLLETSLG…KDIRIRHTVI (171 aa)) enclose the PPIase cyclophilin-type domain. Positions 205–234 (EELDDNMDEESMEKLRREREARAQALTLEM) form a coiled coil. In terms of domain architecture, RRM spans 248–326 (NVLFVCKLNP…HRIHVDFSQS (79 aa)). A disordered region spans residues 341–461 (KRSGQRGGFG…DERYRERRRR (121 aa)). Basic and acidic residues-rich tracts occupy residues 365-384 (DNAR…GDKA) and 398-461 (SNRD…RRRR).

It belongs to the cyclophilin-type PPIase family. PPIL4 subfamily.

The protein resides in the nucleus. The enzyme catalyses [protein]-peptidylproline (omega=180) = [protein]-peptidylproline (omega=0). PPIases accelerate the folding of proteins. It catalyzes the cis-trans isomerization of proline imidic peptide bonds in oligopeptides. The sequence is that of Peptidyl-prolyl cis-trans isomerase-like 4 (cyp6) from Aspergillus oryzae (strain ATCC 42149 / RIB 40) (Yellow koji mold).